A 427-amino-acid chain; its full sequence is MAPGSNGIMDGMHRRIGEAGAFFRSFVPFFLQNVRHDRIFLSAGSLAFQTLLSIVPLLAVVLSILNVFAVFAPLQPYVEDFIVHNFVPGTGGMIREYFSGFIGNTFTMPIFGALFLFIVALVLISTVDHTLNEIWEVHSPRKVLQGFTLYWTVLTLGPVLLATSLAASSFVWYTVFTEGPLLELKTRLLSLLPSTITVLALLLLYLLVPNRRVRFLHALSGALVATLLFEVSKRWFAFYVANVATFEHIYGALSVIPMLFFWIYLGWVVVLTGAEIVYCLGARRLSGPAAPEFDPLRGVPLMLAVLRMVWRAGGEGVVLDMKKILREFHRENPSSLRKIVDILLECRFMHLTASGGMAAASDLHVMTLYDLFIKLPPDFGAEDFGQAGPAWDGIELQGVRERLGACFEESMHVPLIQLMDGSNEGQV.

The next 6 helical transmembrane spans lie at 51-71, 105-125, 147-167, 188-208, 221-241, and 251-271; these read LLSI…FAVF, TFTM…VLIS, FTLY…SLAA, LLSL…YLLV, GALV…FYVA, and GALS…VVVL.

Belongs to the UPF0761 family.

The protein resides in the cell inner membrane. This chain is UPF0761 membrane protein Plut_1323, found in Chlorobium luteolum (strain DSM 273 / BCRC 81028 / 2530) (Pelodictyon luteolum).